The following is a 181-amino-acid chain: Oligoribonuclease (181 aa).

The region spanning Leu8–Leu171 is the Exonuclease domain. Tyr129 is an active-site residue.

The protein belongs to the oligoribonuclease family.

It is found in the cytoplasm. Functionally, 3'-to-5' exoribonuclease specific for small oligoribonucleotides. The polypeptide is Oligoribonuclease (Sodalis glossinidius (strain morsitans)).